The sequence spans 381 residues: Heme A synthase (381 aa).

Helical transmembrane passes span 25 to 45, 112 to 132, 138 to 158, 176 to 196, and 212 to 232; these read GAVR…VAVG, LLGR…WWRG, LLLG…IGWI, LALH…LAAG, and VAGL…LVAG. His-277 serves as a coordination point for heme. The next 3 helical transmembrane spans lie at 279–299, 307–327, and 329–349; these read LFAY…VRMA, AMGV…TLLL, and VPLW…IMAT. Residue His-337 coordinates heme.

This sequence belongs to the COX15/CtaA family. Type 2 subfamily. Interacts with CtaB. The cofactor is heme b.

It is found in the cell membrane. The catalysed reaction is Fe(II)-heme o + 2 A + H2O = Fe(II)-heme a + 2 AH2. It participates in porphyrin-containing compound metabolism; heme A biosynthesis; heme A from heme O: step 1/1. Functionally, catalyzes the conversion of heme O to heme A by two successive hydroxylations of the methyl group at C8. The first hydroxylation forms heme I, the second hydroxylation results in an unstable dihydroxymethyl group, which spontaneously dehydrates, resulting in the formyl group of heme A. The chain is Heme A synthase from Methylorubrum populi (strain ATCC BAA-705 / NCIMB 13946 / BJ001) (Methylobacterium populi).